We begin with the raw amino-acid sequence, 487 residues long: Glutamyl-tRNA(Gln) amidotransferase subunit A (487 aa).

Active-site charge relay system residues include K80 and S155. The active-site Acyl-ester intermediate is the S179.

It belongs to the amidase family. GatA subfamily. Heterotrimer of A, B and C subunits.

The enzyme catalyses L-glutamyl-tRNA(Gln) + L-glutamine + ATP + H2O = L-glutaminyl-tRNA(Gln) + L-glutamate + ADP + phosphate + H(+). In terms of biological role, allows the formation of correctly charged Gln-tRNA(Gln) through the transamidation of misacylated Glu-tRNA(Gln) in organisms which lack glutaminyl-tRNA synthetase. The reaction takes place in the presence of glutamine and ATP through an activated gamma-phospho-Glu-tRNA(Gln). The protein is Glutamyl-tRNA(Gln) amidotransferase subunit A of Leptospira interrogans serogroup Icterohaemorrhagiae serovar Lai (strain 56601).